A 322-amino-acid chain; its full sequence is Ribosomal RNA small subunit methyltransferase H (322 aa).

S-adenosyl-L-methionine is bound by residues 47–49 (GGH), aspartate 67, phenylalanine 93, aspartate 112, and glutamine 119.

This sequence belongs to the methyltransferase superfamily. RsmH family.

The protein resides in the cytoplasm. The catalysed reaction is cytidine(1402) in 16S rRNA + S-adenosyl-L-methionine = N(4)-methylcytidine(1402) in 16S rRNA + S-adenosyl-L-homocysteine + H(+). Functionally, specifically methylates the N4 position of cytidine in position 1402 (C1402) of 16S rRNA. This chain is Ribosomal RNA small subunit methyltransferase H, found in Stenotrophomonas maltophilia (strain R551-3).